The chain runs to 483 residues: Zinc metalloproteinase/disintegrin (483 aa).

A signal peptide spans 1 to 20 (MIQVLLVTICLAVFPYQGSS). Residues 21–190 (IILESGNVND…KASQLYLTPE (170 aa)) constitute a propeptide that is removed on maturation. The region spanning 197–395 (RYIELAIVVD…RNPQCILNAP (199 aa)) is the Peptidase M12B domain. Ca(2+) is bound at residue E200. A glycan (N-linked (GlcNAc...) asparagine) is linked at N263. D284 is a binding site for Ca(2+). N293 is a glycosylation site (N-linked (GlcNAc...) asparagine). Cystine bridges form between C308-C390, C352-C374, and C354-C357. H333 lines the Zn(2+) pocket. E334 is a catalytic residue. The Zn(2+) site is built by H337 and H343. Ca(2+) contacts are provided by C390 and N393. Positions 396–413 (LRTDTVSTPVSGNEFLEA) are excised as a propeptide. Positions 403–483 (TPVSGNEFLE…SNDCPRWNDL (81 aa)) constitute a Disintegrin domain. Cystine bridges form between C417–C432, C419–C427, C426–C449, C440–C446, C445–C470, and C458–C477. The short motif at 462–464 (RGD) is the Cell attachment site element.

This sequence belongs to the venom metalloproteinase (M12B) family. P-II subfamily. P-IIa sub-subfamily. Monomeric (disintegrin). Zn(2+) serves as cofactor. As to expression, expressed by the venom gland.

It localises to the secreted. Its function is as follows. Impairs hemostasis in the envenomed animal. In terms of biological role, inhibits platelet aggregation induced by ADP, thrombin, platelet-activating factor and collagen. Acts by inhibiting fibrinogen interaction with platelet receptors GPIIb/GPIIIa (ITGA2B/ITGB3). In Protobothrops flavoviridis (Habu), this protein is Zinc metalloproteinase/disintegrin.